Here is a 302-residue protein sequence, read N- to C-terminus: 4-hydroxy-tetrahydrodipicolinate synthase (302 aa).

T55 serves as a coordination point for pyruvate. Y144 functions as the Proton donor/acceptor in the catalytic mechanism. K172 (schiff-base intermediate with substrate) is an active-site residue. V214 lines the pyruvate pocket.

It belongs to the DapA family. As to quaternary structure, homotetramer; dimer of dimers.

It is found in the cytoplasm. The catalysed reaction is L-aspartate 4-semialdehyde + pyruvate = (2S,4S)-4-hydroxy-2,3,4,5-tetrahydrodipicolinate + H2O + H(+). The protein operates within amino-acid biosynthesis; L-lysine biosynthesis via DAP pathway; (S)-tetrahydrodipicolinate from L-aspartate: step 3/4. Its function is as follows. Catalyzes the condensation of (S)-aspartate-beta-semialdehyde [(S)-ASA] and pyruvate to 4-hydroxy-tetrahydrodipicolinate (HTPA). The chain is 4-hydroxy-tetrahydrodipicolinate synthase from Prochlorococcus marinus (strain SARG / CCMP1375 / SS120).